We begin with the raw amino-acid sequence, 209 residues long: MNSTNTVVYIKVKGKRPQGFLDPPKFEWNGTKERQLWTMVSNLNYSQDQIDWQNLSKIFETPEFFLKKRTYKLFAEHLELLQLQLEKKRDLEKYSNDQVNEGMSDLIHKYIPTLQNDNLLNVSASPLTTERQDSEEVETEVTNEALQHLQTSKILNIHKKTSDSENKPNDKLDKDGINKEMECGSSDDDLSSSLSVSKSALEEALMDRL.

Ser-104 carries the post-translational modification Phosphoserine. Residues 156 to 198 (NIHKKTSDSENKPNDKLDKDGINKEMECGSSDDDLSSSLSVSK) form a disordered region. Basic and acidic residues predominate over residues 160-182 (KTSDSENKPNDKLDKDGINKEME). Ser-185 and Ser-186 each carry phosphoserine.

This sequence belongs to the ATG29 family. In terms of assembly, forms a stable complex with ATG17 and ATG31. Interacts directly with ATG31. The ATG17-ATG29-ATG31 complex interacts with the ATG1-ATG13 complex. Note=The interaction with the ATG1-ATG13 complex is induced by starvation.

It localises to the preautophagosomal structure. Its function is as follows. Plays a role in autophagy. Functions at the preautophagosomal structure (PAS) in order to form normal autophagosomes under starvation conditions. Also plays a role in mitophagy and regulation of filamentous growth. The polypeptide is Autophagy-related protein 29 (ATG29) (Saccharomyces cerevisiae (strain YJM789) (Baker's yeast)).